The following is a 619-amino-acid chain: Chaperone protein HscA homolog (619 aa).

It belongs to the heat shock protein 70 family.

Its function is as follows. Chaperone involved in the maturation of iron-sulfur cluster-containing proteins. Has a low intrinsic ATPase activity which is markedly stimulated by HscB. This Haemophilus influenzae (strain 86-028NP) protein is Chaperone protein HscA homolog.